A 272-amino-acid polypeptide reads, in one-letter code: Acetylglutamate kinase (272 aa).

Substrate-binding positions include G46–A47, R68, and N166.

The protein belongs to the acetylglutamate kinase family. ArgB subfamily.

It localises to the cytoplasm. It catalyses the reaction N-acetyl-L-glutamate + ATP = N-acetyl-L-glutamyl 5-phosphate + ADP. It functions in the pathway amino-acid biosynthesis; L-arginine biosynthesis; N(2)-acetyl-L-ornithine from L-glutamate: step 2/4. Functionally, catalyzes the ATP-dependent phosphorylation of N-acetyl-L-glutamate. The sequence is that of Acetylglutamate kinase from Dehalococcoides mccartyi (strain CBDB1).